The following is a 60-amino-acid chain: MAVPKRKKSKSRRNMHRSHCKLKVPNIGIDKTTGEYKLSHHICLGGYYNGKQIVEVDSNI.

This sequence belongs to the bacterial ribosomal protein bL32 family.

This Ehrlichia ruminantium (strain Gardel) protein is Large ribosomal subunit protein bL32.